The primary structure comprises 349 residues: uncharacterized protein (349 aa).

A helical transmembrane segment spans residues 221 to 241; sequence AFVVWIGSGLNIIWWTGIVLL. A compositionally biased stretch (pro residues) spans 328–339; sequence VASAPPAVPSQP. The tract at residues 328–349 is disordered; it reads VASAPPAVPSQPPEYSSVFPPV.

The protein localises to the host membrane. This is an uncharacterized protein from Human cytomegalovirus (strain Merlin) (HHV-5).